The chain runs to 852 residues: MKILLFFILFYLFSFSISYDEVIPLGYESHNDSLVIRYREIENYYTNISFLWKGKSRYDMSFNCVLNNTIRTCTLPVKESDHAQMYSEEISACTENNGTFKMCGYDLPLFYFPSPLLISEFKPKTRGGNTTLSGYYLELKERIYVQFENSYRKDQFFYSGYVYLIPGVFQSKTPDRINLILKVYPGCGYRTIIWENHETLNFTYQEPNIEKIDINQSFLDITGTNFYNQSIFVSVKIDNNIIDPNDIISVDFEIIKLKFNYSDPFSSKFNVQVGCCDYWSSQFQITYPPIPSIVNSIPKLKGGLLIINGNRLTSSPSSSNNNNISVTVGDSICSIVSSSSNEIKCNLQPLSNSTFNNSSPIAVSINDVVNTNTLLLIYDTPYITTFSQVNDEIHIIGGCFGNINSTQIHINDKQVFGQIKSINNDETDLILKIQNQIYNFNISIESNSIKSNGINVDVEMYARINEIPLVSNKLINFTLFYVNSSNINLIPTIKIINEKSNQTSKSISTNVNESVVSCSFLIENNCGIINYEIEIGNQIYQSSFSYESPLINKCNLNSNEIVTCIGKGFVNKYNETSIFISGQSIALSKEINNSIYESISFQMNDEYNILGELYLNVCGLLSNKVNINTFPIFKNVSIPNLFDTNGGNIIIIGKYLNNNTNFTIECNGEQIIEKECKLNNSSTSLECYIKLNGPNGKTCKLLFNNDNNIVSTFSFIYKSPSINQTSIINLKQGGILTIIGNDFYYPIDKVTIIGNGNGSGNSSLNCNEAKYINDTMITCFIQATNYTFNNIKNGEMIFINVSTNGKSGISKVFKYLTQSDDVHQYSDARNIFQNLLLSILIIIIISLFISNI.

An N-terminal signal peptide occupies residues Met1–Ser18. Over Tyr19–Asn830 the chain is Extracellular. N-linked (GlcNAc...) asparagine glycans are attached at residues Asn31, Asn47, Asn67, Asn97, Asn129, Asn201, Asn215, Asn228, Asn260, Asn323, Asn352, Asn356, Asn404, Asn441, Asn476, Asn483, Asn501, Asn512, Asn574, Asn592, Asn635, Asn658, Asn661, Asn679, Asn680, Asn723, Asn757, Asn761, Asn773, Asn785, and Asn800. The region spanning Ile290–Asp367 is the IPT/TIG domain. Residues Ile831–Asn851 form a helical membrane-spanning segment. Position 852 (Ile852) is a topological domain, cytoplasmic.

It localises to the membrane. The sequence is that of Tiger protein I3 (tgrI3) from Dictyostelium discoideum (Social amoeba).